Here is a 279-residue protein sequence, read N- to C-terminus: Shikimate dehydrogenase (NADP(+)) (279 aa).

Residues 20 to 22 (SRS) and T67 each bind shikimate. The Proton acceptor role is filled by K71. Position 83 (D83) interacts with NADP(+). Positions 92 and 108 each coordinate shikimate. NADP(+) is bound by residues 134-138 (GAGGA) and L223. Residue Y225 participates in shikimate binding. G246 is an NADP(+) binding site.

Belongs to the shikimate dehydrogenase family. In terms of assembly, homodimer.

The enzyme catalyses shikimate + NADP(+) = 3-dehydroshikimate + NADPH + H(+). The protein operates within metabolic intermediate biosynthesis; chorismate biosynthesis; chorismate from D-erythrose 4-phosphate and phosphoenolpyruvate: step 4/7. In terms of biological role, involved in the biosynthesis of the chorismate, which leads to the biosynthesis of aromatic amino acids. Catalyzes the reversible NADPH linked reduction of 3-dehydroshikimate (DHSA) to yield shikimate (SA). In Cereibacter sphaeroides (strain KD131 / KCTC 12085) (Rhodobacter sphaeroides), this protein is Shikimate dehydrogenase (NADP(+)).